A 120-amino-acid chain; its full sequence is Seripauperin-20 (120 aa).

Residues 7-25 (IAAGVAAIAAGASATTTLA) traverse the membrane as a helical segment.

This sequence belongs to the SRP1/TIP1 family. Seripauperin subfamily.

It is found in the membrane. In Saccharomyces cerevisiae (strain ATCC 204508 / S288c) (Baker's yeast), this protein is Seripauperin-20 (PAU20).